Here is a 337-residue protein sequence, read N- to C-terminus: DnaJ homolog dnj-2 (337 aa).

Residues 4–24 traverse the membrane as a helical segment; the sequence is AIAAPILFLLVSFFVQECESV. The 70-residue stretch at 36–105 folds into the J domain; that stretch reads NCYDVLEVNR…EAKTNYDYYL (70 aa). 2 consecutive transmembrane segments (helical) span residues 127–147 and 222–242; these read VDLR…QFLS and LAWH…WTAL. Positions 293–323 form a coiled coil; that stretch reads LKRNCATWKAERDAAEQEKMAQSGRYKRYKR.

Belongs to the DNAJC25 family.

The protein localises to the membrane. In Caenorhabditis elegans, this protein is DnaJ homolog dnj-2 (dnj-2).